Consider the following 553-residue polypeptide: Undecaprenyl phosphate-alpha-4-amino-4-deoxy-L-arabinose arabinosyl transferase (553 aa).

The next 12 membrane-spanning stretches (helical) occupy residues 8–28, 83–103, 111–131, 132–152, 176–196, 204–224, 255–275, 288–308, 317–337, 350–370, 380–400, and 407–427; these read LVLL…RALW, VRFG…WLAF, VAVL…VGTY, AVLD…FWLG, VMTK…PWVI, VLLF…PWAL, APFW…VALL, IESG…FFSI, ILPC…QLVA, TVFG…WGIA, VLKV…GYLT, and LWQW…GMIP.

It belongs to the glycosyltransferase 83 family.

It is found in the cell inner membrane. The enzyme catalyses 4-amino-4-deoxy-alpha-L-arabinopyranosyl di-trans,octa-cis-undecaprenyl phosphate + lipid IVA = lipid IIA + di-trans,octa-cis-undecaprenyl phosphate.. It participates in lipopolysaccharide metabolism; 4-amino-4-deoxy-beta-L-arabinose-lipid A biosynthesis. Functionally, catalyzes the transfer of the L-Ara4N moiety of the glycolipid undecaprenyl phosphate-alpha-L-Ara4N to lipid A. The modified arabinose is attached to lipid A and is required for resistance to polymyxin and cationic antimicrobial peptides. In Enterobacter sp. (strain 638), this protein is Undecaprenyl phosphate-alpha-4-amino-4-deoxy-L-arabinose arabinosyl transferase.